The chain runs to 363 residues: Protein LEG1 homolog (363 aa).

The signal sequence occupies residues 1–19 (MQCVWTLSLLQLVALWANA). N-linked (GlcNAc...) asparagine glycans are attached at residues Asn79, Asn261, and Asn292.

The protein belongs to the LEG1 family.

It is found in the secreted. In terms of biological role, may be involved in early liver development. The polypeptide is Protein LEG1 homolog (Oncorhynchus mykiss (Rainbow trout)).